A 124-amino-acid polypeptide reads, in one-letter code: Phosphoribosyl-ATP pyrophosphatase (124 aa).

Belongs to the PRA-PH family.

The protein localises to the cytoplasm. The enzyme catalyses 1-(5-phospho-beta-D-ribosyl)-ATP + H2O = 1-(5-phospho-beta-D-ribosyl)-5'-AMP + diphosphate + H(+). It participates in amino-acid biosynthesis; L-histidine biosynthesis; L-histidine from 5-phospho-alpha-D-ribose 1-diphosphate: step 2/9. The protein is Phosphoribosyl-ATP pyrophosphatase of Ralstonia pickettii (strain 12J).